The primary structure comprises 282 residues: Acetyl-coenzyme A carboxylase carboxyl transferase subunit beta (282 aa).

The CoA carboxyltransferase N-terminal domain maps to 29–282 (LMQRCPNCGL…LLKYGGMQDD (254 aa)). The Zn(2+) site is built by Cys-33, Cys-36, Cys-51, and Cys-54. The C4-type zinc finger occupies 33-54 (CPNCGLEFFARRLDKYKTCPDC).

It belongs to the AccD/PCCB family. In terms of assembly, acetyl-CoA carboxylase is a heterohexamer composed of biotin carboxyl carrier protein (AccB), biotin carboxylase (AccC) and two subunits each of ACCase subunit alpha (AccA) and ACCase subunit beta (AccD). Zn(2+) serves as cofactor.

It localises to the cytoplasm. The enzyme catalyses N(6)-carboxybiotinyl-L-lysyl-[protein] + acetyl-CoA = N(6)-biotinyl-L-lysyl-[protein] + malonyl-CoA. The protein operates within lipid metabolism; malonyl-CoA biosynthesis; malonyl-CoA from acetyl-CoA: step 1/1. Functionally, component of the acetyl coenzyme A carboxylase (ACC) complex. Biotin carboxylase (BC) catalyzes the carboxylation of biotin on its carrier protein (BCCP) and then the CO(2) group is transferred by the transcarboxylase to acetyl-CoA to form malonyl-CoA. The polypeptide is Acetyl-coenzyme A carboxylase carboxyl transferase subunit beta (Lactobacillus delbrueckii subsp. bulgaricus (strain ATCC BAA-365 / Lb-18)).